A 203-amino-acid chain; its full sequence is MDIMNNLPIPMVVEQTGRGERAFDIYSRLLKERVVFLVGEVNDASANLVVAQLLFLEAENPDQDIHFYINSPGGSVTAGMSIYDTMQFIKPDVSTMVLGQAASMGAVLLAAGAAGKRYALPNSRVMIHQPLGGFRGQASDIDIHAREILFIRERLNQILAKHSGQDLETISRDTERDNFMSAERAQEYGLVDAILTHRESVSA.

Residue Ser103 is the Nucleophile of the active site. His128 is an active-site residue.

This sequence belongs to the peptidase S14 family. In terms of assembly, fourteen ClpP subunits assemble into 2 heptameric rings which stack back to back to give a disk-like structure with a central cavity, resembling the structure of eukaryotic proteasomes.

It is found in the cytoplasm. It catalyses the reaction Hydrolysis of proteins to small peptides in the presence of ATP and magnesium. alpha-casein is the usual test substrate. In the absence of ATP, only oligopeptides shorter than five residues are hydrolyzed (such as succinyl-Leu-Tyr-|-NHMec, and Leu-Tyr-Leu-|-Tyr-Trp, in which cleavage of the -Tyr-|-Leu- and -Tyr-|-Trp bonds also occurs).. Cleaves peptides in various proteins in a process that requires ATP hydrolysis. Has a chymotrypsin-like activity. Plays a major role in the degradation of misfolded proteins. This chain is ATP-dependent Clp protease proteolytic subunit, found in Dichelobacter nodosus (strain VCS1703A).